Here is a 249-residue protein sequence, read N- to C-terminus: Receptor-transporting protein 4 (249 aa).

The Cytoplasmic portion of the chain corresponds to Met-1 to Glu-227. The 3CxxC-type zinc finger occupies Thr-50–Leu-162. The segment at Lys-173 to Thr-208 is disordered. Residues Thr-199–Thr-208 show a composition bias toward polar residues. The chain crosses the membrane as a helical span at residues Ile-228–Thr-248.

This sequence belongs to the TMEM7 family. Interacts with TASR16. Interacts with OPRD1 and OPRM1; the interaction promotes cell surface localization of the OPDR1-OPRM1 heterodimer. As to expression, expressed at low levels in olfactory neurons. Upon viral infection, highly expressed in brain and different cells of nervous tissue.

The protein localises to the membrane. The protein resides in the cytoplasm. Chaperone protein that facilitates the trafficking and functional cell surface expression of some G-protein coupled receptors (GPCRs). Promotes functional expression of the bitter taste receptor TAS2R16. Also promotes functional expression of the opioid receptor heterodimer OPRD1-OPRM1. In addition, acts as a potent IFN-inducible suppressor of pathogens including lyssavirus rabies, influenza A or yellow fever virus. Mechanistically, associates with the viral replicase, binds viral RNA, and thereby suppresses viral genome amplification that replicates at the endoplasmic reticulum. In addition, restores antiviral signaling by interacting with and sequestering influenza virus protein NS1. The protein is Receptor-transporting protein 4 (Rtp4) of Mus musculus (Mouse).